We begin with the raw amino-acid sequence, 114 residues long: Large ribosomal subunit protein bL19 (114 aa).

It belongs to the bacterial ribosomal protein bL19 family.

Its function is as follows. This protein is located at the 30S-50S ribosomal subunit interface and may play a role in the structure and function of the aminoacyl-tRNA binding site. This Clavibacter sepedonicus (Clavibacter michiganensis subsp. sepedonicus) protein is Large ribosomal subunit protein bL19.